A 338-amino-acid polypeptide reads, in one-letter code: MTDQAAFDTNIVTVTRFVMEEGRKARGTGEMTQLLNSLCTAVKAISTAVRKAGIAHLYGIAGTTNVTGDQVKKLDVLSNDLVVNVLKSSFATCVLVSEEDEHAIIVEPEKRGKYVVCFDPLDGSSNIDCLVSIGTIFGIYKKISKDDPSEKDALQPGRNLVAAGYALYGSATMLVLAMANGVNCFMLDPAIGEFILVDRDVKIKKKGSIYSLNEGYAKDFDPALTEYVQRKKFPPDNSAPYGARYVGSMVADVHRTLVYGGIFMYPANKKSPSGKLRLLYECNPMAYVIEKAGGMATTGKETVLDIVPTDIHQKSPIILGSPEDVTEFLEIYKKHAAK.

Threonine 2 carries the N-acetylthreonine modification. Residues 18–22 (VMEEG) and 28–32 (TGEMT) each bind AMP. Aspartate 69 and glutamate 98 together coordinate Mg(2+). 113–114 (KY) contributes to the AMP binding site. Positions 119, 121, and 122 each coordinate Mg(2+). 122–125 (DGSS) contacts substrate. Lysine 141 lines the AMP pocket. At lysine 151 the chain carries N6-succinyllysine. Position 208 is a phosphoserine (serine 208). Residues 213 to 216 (NEGY), 244 to 249 (RYVGSM), tyrosine 265, and 275 to 277 (KLR) contribute to the substrate site. Phosphotyrosine occurs at positions 216, 245, and 265. Glutamate 281 provides a ligand contact to Mg(2+).

This sequence belongs to the FBPase class 1 family. Homotetramer. The cofactor is Mg(2+).

The catalysed reaction is beta-D-fructose 1,6-bisphosphate + H2O = beta-D-fructose 6-phosphate + phosphate. Its pathway is carbohydrate biosynthesis; gluconeogenesis. Its activity is regulated as follows. Subject to complex allosteric regulation. The enzyme can assume an active R-state, or an inactive T-state. Intermediate conformations may exist. AMP acts as an allosteric inhibitor. AMP binding affects the turnover of bound substrate and not the affinity for substrate. Fructose 2,6-bisphosphate acts as a competitive inhibitor. Fructose 2,6-bisphosphate and AMP have synergistic effects. Functionally, catalyzes the hydrolysis of fructose 1,6-bisphosphate to fructose 6-phosphate in the presence of divalent cations, acting as a rate-limiting enzyme in gluconeogenesis. Plays a role in regulating glucose sensing and insulin secretion of pancreatic beta-cells. Appears to modulate glycerol gluconeogenesis in liver. Important regulator of appetite and adiposity; increased expression of the protein in liver after nutrient excess increases circulating satiety hormones and reduces appetite-stimulating neuropeptides and thus seems to provide a feedback mechanism to limit weight gain. In Bos taurus (Bovine), this protein is Fructose-1,6-bisphosphatase 1 (FBP1).